A 435-amino-acid polypeptide reads, in one-letter code: Methylenetetrahydrofolate--tRNA-(uracil-5-)-methyltransferase TrmFO (435 aa).

Residue 9-14 (GAGLAG) participates in FAD binding.

This sequence belongs to the MnmG family. TrmFO subfamily. FAD serves as cofactor.

It is found in the cytoplasm. The enzyme catalyses uridine(54) in tRNA + (6R)-5,10-methylene-5,6,7,8-tetrahydrofolate + NADH + H(+) = 5-methyluridine(54) in tRNA + (6S)-5,6,7,8-tetrahydrofolate + NAD(+). It carries out the reaction uridine(54) in tRNA + (6R)-5,10-methylene-5,6,7,8-tetrahydrofolate + NADPH + H(+) = 5-methyluridine(54) in tRNA + (6S)-5,6,7,8-tetrahydrofolate + NADP(+). Catalyzes the folate-dependent formation of 5-methyl-uridine at position 54 (M-5-U54) in all tRNAs. The chain is Methylenetetrahydrofolate--tRNA-(uracil-5-)-methyltransferase TrmFO from Staphylococcus aureus (strain MRSA252).